The primary structure comprises 609 residues: Polyadenylate-binding protein 7 (609 aa).

4 consecutive RRM domains span residues 24 to 102 (ASLY…WSVR), 112 to 189 (GNVF…KFMK), 201 to 278 (TNLY…RAQK), and 304 to 381 (SNIY…IAQK). In terms of domain architecture, PABC spans 509–586 (EMKKSIQQRQ…AFEVLKSSKT (78 aa)).

Belongs to the polyadenylate-binding protein type-1 family. As to expression, expressed predominantly in siliques.

Its subcellular location is the cytoplasm. The protein resides in the nucleus. Its function is as follows. Binds the poly(A) tail of mRNA. Appears to be an important mediator of the multiple roles of the poly(A) tail in mRNA biogenesis, stability and translation. This chain is Polyadenylate-binding protein 7 (PAB7), found in Arabidopsis thaliana (Mouse-ear cress).